Reading from the N-terminus, the 188-residue chain is MATIIQAKDLRAGHTFLYKGNIYQVIENSFNKTAMREGIVKCKVKNLRTGAITIEVLTGEKLEQAVIEKSKMTFSYDDGSGYVFMDNDTYEQISIPYSQLSWEKNFIEEGTEVSVMRYDGELMGVSLPDQLVVTIIEAEEAVQGNSVQNATKRAWLESKWEFQVPQFIKSGEKVIINPSNGQYVGRAK.

It belongs to the elongation factor P family.

The protein resides in the cytoplasm. Its pathway is protein biosynthesis; polypeptide chain elongation. In terms of biological role, involved in peptide bond synthesis. Stimulates efficient translation and peptide-bond synthesis on native or reconstituted 70S ribosomes in vitro. Probably functions indirectly by altering the affinity of the ribosome for aminoacyl-tRNA, thus increasing their reactivity as acceptors for peptidyl transferase. In Ureaplasma parvum serovar 3 (strain ATCC 700970), this protein is Elongation factor P (efp).